The chain runs to 207 residues: Ras-related protein Rab-7a (207 aa).

Threonine 2 carries the N-acetylthreonine modification. GTP is bound by residues serine 17, glycine 18, valine 19, glycine 20, lysine 21, threonine 22, serine 23, serine 34, asparagine 35, tyrosine 37, and threonine 40. Threonine 22 contacts Mg(2+). Positions tyrosine 28–isoleucine 41 match the Switch 1 motif. Positions 40 and 63 each coordinate Mg(2+). Glycine 66 serves as a coordination point for GTP. The Switch 2 signature appears at glutamine 67–aspartate 82. Serine 72 is modified (phosphoserine). GTP contacts are provided by asparagine 125, lysine 126, aspartate 128, alanine 156, and lysine 157. Glycyl lysine isopeptide (Lys-Gly) (interchain with G-Cter in ubiquitin) cross-links involve residues lysine 191 and lysine 194. Residues cysteine 205 and cysteine 207 are each lipidated (S-geranylgeranyl cysteine). At cysteine 207 the chain carries Cysteine methyl ester.

This sequence belongs to the small GTPase superfamily. Rab family. In terms of assembly, interacts with NTRK1/TRKA. Interacts with RILP. Interacts with PSMA7. Interacts with RNF115. Interacts with FYCO1. Interacts with the PIK3C3/VPS34-PIK3R4 complex. The GTP-bound form interacts with OSBPL1A. The GTP-bound form interacts with RAC1. Interacts with CLN3. Interacts with CHM, the substrate-binding subunit of the Rab geranylgeranyltransferase complex. Interacts with C9orf72. Does not interact with HPS4 and the BLOC-3 complex (heterodimer of HPS1 and HPS4). Interacts with CLN5. Interacts with PLEKHM1 (via N- and C-terminus). Interacts with PRPH; the interaction is direct. Interacts with VPS13A. The GDP-bound form interacts with RIMOC1. Interacts with the MON1A-CCZ1B complex and this interaction is enhanced in the presence of RIMOC1. Interacts with VPS39 and VPS41. Forms a ternary complex with LAMP2 and RUFY4; the interaction with LAMP2 is mediated by RUFY4 (via RUN and coiled coil domains). Requires Mg(2+) as cofactor. Deubiquitination at Lys-191 and Lys-194 by USP32. Post-translationally, phosphorylated at Ser-72 by LRRK1; phosphorylation is dependent on protein kinase C (PKC) activation of LRRK1. In terms of processing, prenylated. Prenylation is required for association with cellular membranes.

Its subcellular location is the cytoplasmic vesicle. It is found in the phagosome membrane. It localises to the late endosome membrane. The protein localises to the lysosome membrane. The protein resides in the melanosome membrane. Its subcellular location is the autophagosome membrane. It is found in the lipid droplet. It localises to the endosome membrane. The protein localises to the mitochondrion membrane. It catalyses the reaction GTP + H2O = GDP + phosphate + H(+). Regulated by guanine nucleotide exchange factors (GEFs) which promote the exchange of bound GDP for free GTP. Regulated by GTPase activating proteins (GAPs) which increase the GTP hydrolysis activity. Inhibited by GDP dissociation inhibitors (GDIs). In terms of biological role, the small GTPases Rab are key regulators of intracellular membrane trafficking, from the formation of transport vesicles to their fusion with membranes. Rabs cycle between an inactive GDP-bound form and an active GTP-bound form that is able to recruit to membranes different sets of downstream effectors directly responsible for vesicle formation, movement, tethering and fusion. In its active state, RAB7A binds to a variety of effector proteins playing a key role in the regulation of endo-lysosomal trafficking. Governs early-to-late endosomal maturation, microtubule minus-end as well as plus-end directed endosomal migration and positioning, and endosome-lysosome transport through different protein-protein interaction cascades. Also plays a central role in growth-factor-mediated cell signaling, nutrient-transporter-mediated nutrient uptake, neurotrophin transport in the axons of neurons and lipid metabolism. Also involved in regulation of some specialized endosomal membrane trafficking, such as maturation of melanosomes, pathogen-induced phagosomes (or vacuoles) and autophagosomes. Plays a role in the maturation and acidification of phagosomes that engulf pathogens, such as S.aureus and Mycobacteria. Plays a role in the fusion of phagosomes with lysosomes. In concert with RAC1, plays a role in regulating the formation of RBs (ruffled borders) in osteoclasts. Controls the endosomal trafficking and neurite outgrowth signaling of NTRK1/TRKA. Regulates the endocytic trafficking of the EGF-EGFR complex by regulating its lysosomal degradation. Involved in the ADRB2-stimulated lipolysis through lipophagy, a cytosolic lipase-independent autophagic pathway. Required for the exosomal release of SDCBP, CD63 and syndecan. Required for vesicular trafficking and cell surface expression of ACE2. May play a role in PRPH neuronal intermediate filament assembly. The chain is Ras-related protein Rab-7a (RAB7A) from Oryctolagus cuniculus (Rabbit).